Reading from the N-terminus, the 176-residue chain is ATP-dependent protease subunit HslV (176 aa).

T2 is an active-site residue. The Na(+) site is built by A157, C160, and T163.

It belongs to the peptidase T1B family. HslV subfamily. A double ring-shaped homohexamer of HslV is capped on each side by a ring-shaped HslU homohexamer. The assembly of the HslU/HslV complex is dependent on binding of ATP.

The protein localises to the cytoplasm. The enzyme catalyses ATP-dependent cleavage of peptide bonds with broad specificity.. Its activity is regulated as follows. Allosterically activated by HslU binding. Functionally, protease subunit of a proteasome-like degradation complex believed to be a general protein degrading machinery. This chain is ATP-dependent protease subunit HslV, found in Buchnera aphidicola subsp. Acyrthosiphon pisum (strain APS) (Acyrthosiphon pisum symbiotic bacterium).